The sequence spans 363 residues: 3-dehydroquinate synthase (363 aa).

NAD(+)-binding positions include 72–77 (SGEKEK), 130–131 (TT), Lys142, and Lys151. Positions 184, 247, and 264 each coordinate Zn(2+).

The protein belongs to the sugar phosphate cyclases superfamily. Dehydroquinate synthase family. It depends on Co(2+) as a cofactor. The cofactor is Zn(2+). NAD(+) is required as a cofactor.

Its subcellular location is the cytoplasm. The catalysed reaction is 7-phospho-2-dehydro-3-deoxy-D-arabino-heptonate = 3-dehydroquinate + phosphate. It participates in metabolic intermediate biosynthesis; chorismate biosynthesis; chorismate from D-erythrose 4-phosphate and phosphoenolpyruvate: step 2/7. In terms of biological role, catalyzes the conversion of 3-deoxy-D-arabino-heptulosonate 7-phosphate (DAHP) to dehydroquinate (DHQ). This is 3-dehydroquinate synthase from Bacillus thuringiensis subsp. konkukian (strain 97-27).